We begin with the raw amino-acid sequence, 186 residues long: Glutathione-independent glyoxalase DJR-1.2 (186 aa).

Catalysis depends on residues E20, C105, and H124.

The protein belongs to the peptidase C56 family. DJ-1 subfamily. Expressed in various tissues, including pharyngeal muscles, pharynx-intestinal valve, ventral nerve cord, spermatheca, rectal gland, inner labial (IL) cells of head neurons, phasmid (PHA/PHB) neurons in tail and supporting sheath/socket cells, as well as in head mesodermal cells (HMC), excretory canals and coelomocytes.

Its subcellular location is the cytoplasm. The enzyme catalyses methylglyoxal + H2O = (R)-lactate + H(+). Its function is as follows. Catalyzes the conversion of methylglyoxal (MG) or glyoxal (GO) to D-lactate or glycolic acid respectively in a single glutathione (GSH)-independent step. May play a role in detoxifying endogenously produced glyoxals. Involved in protection against glyoxal-induced cell death. Protects dopaminergic neurons from glyoxal-dependent neuronal degeneration. This chain is Glutathione-independent glyoxalase DJR-1.2, found in Caenorhabditis elegans.